A 236-amino-acid polypeptide reads, in one-letter code: tRNA1(Val) (adenine(37)-N6)-methyltransferase (236 aa).

It belongs to the methyltransferase superfamily. tRNA (adenine-N(6)-)-methyltransferase family.

The protein resides in the cytoplasm. It catalyses the reaction adenosine(37) in tRNA1(Val) + S-adenosyl-L-methionine = N(6)-methyladenosine(37) in tRNA1(Val) + S-adenosyl-L-homocysteine + H(+). Its function is as follows. Specifically methylates the adenine in position 37 of tRNA(1)(Val) (anticodon cmo5UAC). This Aeromonas hydrophila subsp. hydrophila (strain ATCC 7966 / DSM 30187 / BCRC 13018 / CCUG 14551 / JCM 1027 / KCTC 2358 / NCIMB 9240 / NCTC 8049) protein is tRNA1(Val) (adenine(37)-N6)-methyltransferase.